The following is a 266-amino-acid chain: Hydroxyethylthiazole kinase (266 aa).

Met-45 lines the substrate pocket. 2 residues coordinate ATP: Lys-121 and Ser-167. Position 194 (Gly-194) interacts with substrate.

This sequence belongs to the Thz kinase family. Mg(2+) is required as a cofactor.

It carries out the reaction 5-(2-hydroxyethyl)-4-methylthiazole + ATP = 4-methyl-5-(2-phosphooxyethyl)-thiazole + ADP + H(+). Its pathway is cofactor biosynthesis; thiamine diphosphate biosynthesis; 4-methyl-5-(2-phosphoethyl)-thiazole from 5-(2-hydroxyethyl)-4-methylthiazole: step 1/1. Catalyzes the phosphorylation of the hydroxyl group of 4-methyl-5-beta-hydroxyethylthiazole (THZ). In Methanocella arvoryzae (strain DSM 22066 / NBRC 105507 / MRE50), this protein is Hydroxyethylthiazole kinase.